A 147-amino-acid polypeptide reads, in one-letter code: MARTKQTARKATAWQAPRKPLATKAARKRASPTGGIKKPHRYKPGTLALREIRKYQKSTQLLLRKLPFQRLVREIAQAISPDLRFQSAAIGALQEASEAYLVQLFEDTNLCAIHARRVTIMPRDMQLARRLRGEGAGEPTLLGNLAL.

The segment covering 1–16 (MARTKQTARKATAWQA) has biased composition (low complexity). The interval 1–43 (MARTKQTARKATAWQAPRKPLATKAARKRASPTGGIKKPHRYK) is disordered. The residue at position 3 (arginine 3) is an Asymmetric dimethylarginine. A Citrulline; alternate modification is found at arginine 3. The residue at position 4 (threonine 4) is a Phosphothreonine. Lysine 5 bears the Allysine; alternate mark. Position 5 is an N6,N6,N6-trimethyllysine; alternate (lysine 5). Position 5 is an N6,N6-dimethyllysine; alternate (lysine 5). Lysine 5 carries the post-translational modification N6-(2-hydroxyisobutyryl)lysine; alternate. Lysine 5 bears the N6-(beta-hydroxybutyryl)lysine; alternate mark. Lysine 5 is subject to N6-acetyllysine; alternate. At lysine 5 the chain carries N6-crotonyllysine; alternate. At lysine 5 the chain carries N6-methyllysine; alternate. Glutamine 6 is modified (5-glutamyl dopamine; alternate). Glutamine 6 is modified (5-glutamyl serotonin; alternate). The residue at position 7 (threonine 7) is a Phosphothreonine. Arginine 9 carries the post-translational modification Citrulline; alternate. The residue at position 9 (arginine 9) is a Symmetric dimethylarginine. Lysine 10 carries the post-translational modification N6,N6,N6-trimethyllysine; alternate. At lysine 10 the chain carries N6,N6-dimethyllysine; alternate. Position 10 is an N6-(2-hydroxyisobutyryl)lysine; alternate (lysine 10). Lysine 10 carries the post-translational modification N6-(beta-hydroxybutyryl)lysine; alternate. N6-acetyllysine; alternate is present on lysine 10. Lysine 10 bears the N6-crotonyllysine; alternate mark. Residue lysine 10 is modified to N6-methyllysine; alternate. Residue lysine 10 is modified to N6-butyryllysine; alternate. Lysine 10 is modified (N6-lactoyllysine; alternate). Threonine 12 carries the phosphothreonine modification. Arginine 18 bears the Asymmetric dimethylarginine mark. Citrulline; alternate is present on arginine 18. 2 positions are modified to N6-(2-hydroxyisobutyryl)lysine; alternate: lysine 19 and lysine 24. Residues lysine 19 and lysine 24 each carry the N6-(beta-hydroxybutyryl)lysine; alternate modification. N6-acetyllysine; alternate occurs at positions 19 and 24. N6-crotonyllysine; alternate is present on residues lysine 19 and lysine 24. N6-methyllysine; alternate occurs at positions 19 and 24. N6-butyryllysine; alternate occurs at positions 19 and 24. Residues lysine 19 and lysine 24 each carry the N6-lactoyllysine; alternate modification. N6-glutaryllysine; alternate is present on residues lysine 19 and lysine 24. Arginine 27 carries the citrulline modification. 2 positions are modified to N6,N6,N6-trimethyllysine; alternate: lysine 28 and lysine 37. Residues lysine 28 and lysine 37 each carry the N6,N6-dimethyllysine; alternate modification. An N6-(2-hydroxyisobutyryl)lysine; alternate mark is found at lysine 28 and lysine 37. Lysine 28 bears the N6-(beta-hydroxybutyryl)lysine; alternate mark. 2 positions are modified to N6-acetyllysine; alternate: lysine 28 and lysine 37. Lysine 28 is modified (N6-crotonyllysine; alternate). An N6-methyllysine; alternate mark is found at lysine 28 and lysine 37. Lysine 28 is subject to N6-lactoyllysine; alternate. N6-glutaryllysine; alternate is present on lysine 28. Lysine 38 bears the N6-methyllysine mark. Tyrosine 42 is modified (phosphotyrosine). Lysine 57 is subject to N6,N6,N6-trimethyllysine; alternate. Residue lysine 57 is modified to N6-(2-hydroxyisobutyryl)lysine; alternate. Lysine 57 bears the N6-(beta-hydroxybutyryl)lysine; alternate mark. Lysine 57 carries the N6-acetyllysine; alternate modification. Residue lysine 57 is modified to N6-crotonyllysine; alternate. Lysine 57 is subject to N6-lactoyllysine; alternate. Lysine 57 is modified (N6-glutaryllysine; alternate). Position 57 is an N6-methyllysine (lysine 57). N6-succinyllysine; alternate is present on lysine 57. Serine 58 carries the phosphoserine modification. Position 65 is an N6-(2-hydroxyisobutyryl)lysine; alternate (lysine 65). Lysine 65 carries the post-translational modification N6-methyllysine; alternate. Residue serine 87 is modified to Phosphoserine. Position 108 is a phosphothreonine (threonine 108).

Belongs to the histone H3 family. In terms of assembly, the nucleosome is a histone octamer containing two molecules each of H2A, H2B, H3 and H4 assembled in one H3-H4 heterotetramer and two H2A-H2B heterodimers. The octamer wraps approximately 147 bp of DNA. Acetylation is generally linked to gene activation. Acetylation on Lys-10 (H3K9ac) impairs methylation at Arg-9 (H3R8me2s). Acetylation on Lys-19 (H3K18ac) and Lys-24 (H3K24ac) favors methylation at Arg-18 (H3R17me). In terms of processing, citrullination at Arg-9 (H3R8ci) and/or Arg-18 (H3R17ci) impairs methylation and represses transcription. Post-translationally, asymmetric dimethylation at Arg-18 (H3R17me2a) is linked to gene activation. Symmetric dimethylation at Arg-9 (H3R8me2s) is linked to gene repression. Asymmetric dimethylation at Arg-3 (H3R2me2a) is linked to gene repression and is mutually exclusive with H3 Lys-5 methylation (H3K4me2 and H3K4me3). H3R2me2a is present at the 3' of genes regardless of their transcription state and is enriched on inactive promoters, while it is absent on active promoters. Methylation at Lys-5 (H3K4me) facilitates subsequent acetylation of H3 and H4. Methylation at Lys-10 (H3K9me) and Lys-28 (H3K27me), which are linked to gene repression, are underrepresented. Methylation at Lys-10 (H3K9me) is a specific target for HP1 proteins (CBX1, CBX3 and CBX5) and prevents subsequent acetylation of H3 and H4. In terms of processing, phosphorylation at Thr-7 (H3T6ph) is a specific tag for epigenetic transcriptional activation that prevents demethylation of Lys-5 (H3K4me) by LSD1/KDM1A. At centromeres, specifically phosphorylated at Thr-12 (H3T11ph) from prophase to early anaphase. Phosphorylation at Thr-12 (H3T11ph) is a specific tag for epigenetic transcriptional activation that promotes demethylation of Lys-10 (H3K9me). Phosphorylation at Tyr-42 (H3Y41ph) promotes exclusion of CBX5 (HP1 alpha) from chromatin. Post-translationally, lysine deamination at Lys-5 (H3K4all) to form allysine. Allysine formation only takes place on H3K4me3 and results in gene repression. Crotonylation (Kcr) is specifically present in male germ cells and marks testis-specific genes in post-meiotic cells, including X-linked genes that escape sex chromosome inactivation in haploid cells. Crotonylation marks active promoters and enhancers and confers resistance to transcriptional repressors. It is also associated with post-meiotically activated genes on autosomes. In terms of processing, butyrylation of histones marks active promoters and competes with histone acetylation. It is present during late spermatogenesis. Expressed at low level in some tissues, such as testis and brain.

It is found in the nucleus. Its subcellular location is the chromosome. Primate-specific variant histone H3, which constitutes a core component of nucleosomes. Nucleosomes wrap and compact DNA into chromatin, limiting DNA accessibility to the cellular machineries which require DNA as a template. Histones thereby play a central role in transcription regulation, DNA repair, DNA replication and chromosomal stability. DNA accessibility is regulated via a complex set of post-translational modifications of histones, also called histone code, and nucleosome remodeling. This is Histone H3.X from Homo sapiens (Human).